Reading from the N-terminus, the 86-residue chain is Large ribosomal subunit protein bL27 (86 aa).

Residues 1–24 (MAHKKGTGSTRNGRDSNSKRLGVK) are disordered.

It belongs to the bacterial ribosomal protein bL27 family.

The chain is Large ribosomal subunit protein bL27 from Prochlorococcus marinus (strain MIT 9312).